We begin with the raw amino-acid sequence, 82 residues long: Large ribosomal subunit protein uL23 (82 aa).

This sequence belongs to the universal ribosomal protein uL23 family. As to quaternary structure, part of the 50S ribosomal subunit. Contacts protein L29.

Binds to 23S rRNA. One of the proteins that surrounds the polypeptide exit tunnel on the outside of the ribosome. The protein is Large ribosomal subunit protein uL23 of Methanosarcina mazei (strain ATCC BAA-159 / DSM 3647 / Goe1 / Go1 / JCM 11833 / OCM 88) (Methanosarcina frisia).